Consider the following 361-residue polypeptide: Zygote arrest protein 1 (361 aa).

2 disordered regions span residues 68–129 and 142–252; these read GPRP…PRSW and GLSS…EQDK. The segment covering 116 to 128 has biased composition (low complexity); the sequence is PRSPARAGRPPRS. T155 carries the phosphothreonine modification. Residues 238–252 show a composition bias toward basic and acidic residues; it reads ASRDRASPQSTEQDK. The 3CxxC-type zinc finger occupies 263-346; the sequence is KYGYYHCKDC…RQDLCGRCKD (84 aa).

Belongs to the ZAR1 family. As to quaternary structure, interacts with YBX2. In terms of processing, phosphorylation by CDK1 does not regulate formation of MARDO (mitochondria-associated ribonucleoprotein domain) membraneless compartment. Post-translationally, ubiquitinated and degradaded by the proteasome during oocyte meiotic maturation, leading to MARDO (mitochondria-associated ribonucleoprotein domain) membraneless compartment dissolution.

It localises to the cytoplasm. It is found in the cytoplasmic ribonucleoprotein granule. Its function is as follows. mRNA-binding protein that mediates formation of MARDO (mitochondria-associated ribonucleoprotein domain), a membraneless compartment that stores maternal mRNAs in oocytes. MARDO assembly around mitochondria is directed by an increase in mitochondrial membrane potential during oocyte growth. Promotes formation of MARDO phase-separated membraneless compartment by undergoing liquid-liquid phase separation upon binding to maternal mRNAs. Binds to the 3'-UTR of maternal mRNAs. Maternal mRNAs stored in the MARDO are translationally repressed. Essential for female fertility and oocyte-to-embryo transition by coordinating maternal mRNA storage, translation and degradation. The protein is Zygote arrest protein 1 of Rattus norvegicus (Rat).